Here is a 130-residue protein sequence, read N- to C-terminus: Annexin A1 (130 aa).

Gln19 participates in a covalent cross-link: Isoglutamyl lysine isopeptide (Gln-Lys) (interchain with K-?). Ser24 is modified (phosphoserine; by PKC). 2 Annexin repeats span residues Phe37–Lys108 and Thr109–Arg130. 11 residues coordinate Ca(2+): Gly54, Val55, Glu57, Lys92, Leu95, Glu100, Met122, Gly124, Gly126, Thr127, and Arg130.

The protein belongs to the annexin family.

The protein resides in the nucleus. Its subcellular location is the cytoplasm. The protein localises to the cell projection. It localises to the cilium. It is found in the basolateral cell membrane. The protein resides in the lateral cell membrane. Its subcellular location is the cell membrane. The protein localises to the apical cell membrane. It localises to the membrane. It is found in the early endosome. The protein resides in the cytoplasmic vesicle membrane. Its subcellular location is the endosome membrane. The protein localises to the secreted. It localises to the extracellular space. It is found in the extracellular exosome. The protein resides in the cytoplasmic vesicle. Its subcellular location is the secretory vesicle lumen. The protein localises to the phagocytic cup. In terms of biological role, plays important roles in the innate immune response as effector of glucocorticoid-mediated responses and regulator of the inflammatory process. Has anti-inflammatory activity. Plays a role in glucocorticoid-mediated down-regulation of the early phase of the inflammatory response. Promotes resolution of inflammation and wound healing. Functions at least in part by activating the formyl peptide receptors and downstream signaling cascades. Promotes chemotaxis of granulocytes and monocytes via activation of the formyl peptide receptors. Contributes to the adaptive immune response by enhancing signaling cascades that are triggered by T-cell activation, regulates differentiation and proliferation of activated T-cells. Promotes the differentiation of T-cells into Th1 cells and negatively regulates differentiation into Th2 cells. Has no effect on unstimulated T-cells. Promotes rearrangement of the actin cytoskeleton, cell polarization and cell migration. Negatively regulates hormone exocytosis via activation of the formyl peptide receptors and reorganization of the actin cytoskeleton. Has high affinity for Ca(2+) and can bind up to eight Ca(2+) ions. Displays Ca(2+)-dependent binding to phospholipid membranes. Plays a role in the formation of phagocytic cups and phagosomes. Plays a role in phagocytosis by mediating the Ca(2+)-dependent interaction between phagosomes and the actin cytoskeleton. The polypeptide is Annexin A1 (ANXA1) (Gallus gallus (Chicken)).